We begin with the raw amino-acid sequence, 116 residues long: T cell receptor alpha variable 38-2/delta variable 8 (116 aa).

An N-terminal signal peptide occupies residues 1-21 (MACPGFLWALVISTCLEFSMA). Residues 22–116 (QTVTQSQPEM…AAMYFCAYRS (95 aa)) enclose the Ig-like domain. C43 and C112 are disulfide-bonded. N-linked (GlcNAc...) asparagine glycosylation is present at N78.

In terms of assembly, alpha-beta TR is a heterodimer composed of an alpha and beta chain; disulfide-linked. The alpha-beta TR is associated with the transmembrane signaling CD3 coreceptor proteins to form the TR-CD3 (TcR or TCR). The assembly of alpha-beta TR heterodimers with CD3 occurs in the endoplasmic reticulum where a single alpha-beta TR heterodimer associates with one CD3D-CD3E heterodimer, one CD3G-CD3E heterodimer and one CD247 homodimer forming a stable octameric structure. CD3D-CD3E and CD3G-CD3E heterodimers preferentially associate with TR alpha and TR beta chains, respectively. The association of the CD247 homodimer is the last step of TcR assembly in the endoplasmic reticulum and is required for transport to the cell surface.

Its subcellular location is the cell membrane. Functionally, v region of the variable domain of T cell receptor (TR) alpha chain that participates in the antigen recognition. Alpha-beta T cell receptors are antigen specific receptors which are essential to the immune response and are present on the cell surface of T lymphocytes. Recognize peptide-major histocompatibility (MH) (pMH) complexes that are displayed by antigen presenting cells (APC), a prerequisite for efficient T cell adaptive immunity against pathogens. Binding of alpha-beta TR to pMH complex initiates TR-CD3 clustering on the cell surface and intracellular activation of LCK that phosphorylates the ITAM motifs of CD3G, CD3D, CD3E and CD247 enabling the recruitment of ZAP70. In turn ZAP70 phosphorylates LAT, which recruits numerous signaling molecules to form the LAT signalosome. The LAT signalosome propagates signal branching to three major signaling pathways, the calcium, the mitogen-activated protein kinase (MAPK) kinase and the nuclear factor NF-kappa-B (NF-kB) pathways, leading to the mobilization of transcription factors that are critical for gene expression and essential for T cell growth and differentiation. The T cell repertoire is generated in the thymus, by V-(D)-J rearrangement. This repertoire is then shaped by intrathymic selection events to generate a peripheral T cell pool of self-MH restricted, non-autoaggressive T cells. Post-thymic interaction of alpha-beta TR with the pMH complexes shapes TR structural and functional avidity. The chain is T cell receptor alpha variable 38-2/delta variable 8 from Homo sapiens (Human).